The following is a 172-amino-acid chain: Large ribosomal subunit protein uL10 (172 aa).

It belongs to the universal ribosomal protein uL10 family. In terms of assembly, part of the ribosomal stalk of the 50S ribosomal subunit. The N-terminus interacts with L11 and the large rRNA to form the base of the stalk. The C-terminus forms an elongated spine to which L12 dimers bind in a sequential fashion forming a multimeric L10(L12)X complex.

In terms of biological role, forms part of the ribosomal stalk, playing a central role in the interaction of the ribosome with GTP-bound translation factors. The protein is Large ribosomal subunit protein uL10 of Rhodospirillum centenum (strain ATCC 51521 / SW).